A 160-amino-acid polypeptide reads, in one-letter code: Transcriptional repressor NrdR (160 aa).

Residues 3–34 fold into a zinc finger; it reads CPFCGAEDTSVVDSRVSEEGSRIRRRRQCTAC. The ATP-cone domain occupies 49 to 139; sequence PQIIKQGGNR…VYRSFEDVGD (91 aa).

Belongs to the NrdR family. Zn(2+) is required as a cofactor.

Negatively regulates transcription of bacterial ribonucleotide reductase nrd genes and operons by binding to NrdR-boxes. This is Transcriptional repressor NrdR from Nitrosomonas eutropha (strain DSM 101675 / C91 / Nm57).